The primary structure comprises 172 residues: L-methionine sulfoximine/L-methionine sulfone acetyltransferase (172 aa).

One can recognise an N-acetyltransferase domain in the interval 3 to 166; sequence ASIRDAGVAD…DLTFMQLNLD (164 aa). Residues 75–77 and 85–87 each bind substrate; these read RPF and EHS. Acetyl-CoA is bound by residues 88 to 90, 96 to 101, and Asn-127; these read VYV and GKGLGV.

Homodimer.

The enzyme catalyses L-methionine sulfoximine + acetyl-CoA = N-acetyl-L-methionine sulfoximine + CoA + H(+). It carries out the reaction L-methionine sulfone + acetyl-CoA = N-acetyl-L-methionine sulfone + CoA + H(+). Plays a role in the resistance against the toxic effects of L-methionine sulfoximine (MSX), a rare amino acid, which inhibits glutamine synthetase (GlnA). Catalyzes the acetylation of L-methionine sulfoximine (MSX). It can also use L-methionine sulfone (MSO). The protein is L-methionine sulfoximine/L-methionine sulfone acetyltransferase of Pseudomonas paraeruginosa (strain DSM 24068 / PA7) (Pseudomonas aeruginosa (strain PA7)).